Consider the following 156-residue polypeptide: Arginine repressor (156 aa).

Belongs to the ArgR family.

The protein resides in the cytoplasm. Its pathway is amino-acid biosynthesis; L-arginine biosynthesis [regulation]. Its function is as follows. Regulates arginine biosynthesis genes. The chain is Arginine repressor from Sodalis glossinidius (strain morsitans).